Here is a 540-residue protein sequence, read N- to C-terminus: Transcription initiation factor IIF subunit alpha (540 aa).

Residues Met-1–Glu-26 show a composition bias toward basic and acidic residues. 2 disordered regions span residues Met-1–Gln-39 and Ile-70–Asn-106. 2 stretches are compositionally biased toward polar residues: residues Ser-29–Gln-39 and Ala-89–Asn-106. Phosphoserine occurs at positions 259 and 261. A coiled-coil region spans residues Met-280 to Ser-382. Positions Tyr-341–Ser-416 are disordered. The span at Ser-359–Glu-369 shows a compositional bias: acidic residues. A compositionally biased stretch (polar residues) spans Phe-381–Ser-416. Ser-399 is modified (phosphoserine).

This sequence belongs to the TFIIF alpha subunit family. Component of the fcp1/TFIIF/polII complex via interaction of tfg3 with both tfg1/TFIIF-alpha and tfg2/TFIIF-beta subunits.

The protein resides in the nucleus. TFIIF is a general transcription initiation factor that binds to RNA polymerase II and helps to recruit it to the initiation complex in collaboration with TFIIB. It promotes transcription elongation. The protein is Transcription initiation factor IIF subunit alpha (tfg1) of Schizosaccharomyces pombe (strain 972 / ATCC 24843) (Fission yeast).